A 65-amino-acid polypeptide reads, in one-letter code: Large ribosomal subunit protein bL35 (65 aa).

The protein belongs to the bacterial ribosomal protein bL35 family.

The chain is Large ribosomal subunit protein bL35 from Caldicellulosiruptor saccharolyticus (strain ATCC 43494 / DSM 8903 / Tp8T 6331).